We begin with the raw amino-acid sequence, 365 residues long: Phospho-N-acetylmuramoyl-pentapeptide-transferase (365 aa).

The next 10 helical transmembrane spans lie at Tyr22–Gly42, Thr74–Leu94, Thr95–Phe115, Tyr133–Leu153, Ser168–Gly188, Gly201–Glu221, Leu240–Phe260, Val267–Met287, Leu292–Val312, and Lys342–Ile362.

This sequence belongs to the glycosyltransferase 4 family. MraY subfamily. It depends on Mg(2+) as a cofactor.

The protein resides in the cell inner membrane. The enzyme catalyses UDP-N-acetyl-alpha-D-muramoyl-L-alanyl-gamma-D-glutamyl-meso-2,6-diaminopimeloyl-D-alanyl-D-alanine + di-trans,octa-cis-undecaprenyl phosphate = di-trans,octa-cis-undecaprenyl diphospho-N-acetyl-alpha-D-muramoyl-L-alanyl-D-glutamyl-meso-2,6-diaminopimeloyl-D-alanyl-D-alanine + UMP. It functions in the pathway cell wall biogenesis; peptidoglycan biosynthesis. In terms of biological role, catalyzes the initial step of the lipid cycle reactions in the biosynthesis of the cell wall peptidoglycan: transfers peptidoglycan precursor phospho-MurNAc-pentapeptide from UDP-MurNAc-pentapeptide onto the lipid carrier undecaprenyl phosphate, yielding undecaprenyl-pyrophosphoryl-MurNAc-pentapeptide, known as lipid I. The sequence is that of Phospho-N-acetylmuramoyl-pentapeptide-transferase from Francisella tularensis subsp. tularensis (strain WY96-3418).